The following is a 1401-amino-acid chain: Lysine-specific demethylase 6A (1401 aa).

The segment at 1-1095 is interaction with SUPT6H; the sequence is MKSCGVSLAT…TNIDLSDDKK (1095 aa). TPR repeat units follow at residues 95 to 128, 132 to 165, 169 to 203, 207 to 240, 245 to 285, 286 to 319, 321 to 353, and 355 to 387; these read SDFFCQLGHFNLLLEDYPKALSAYQRYYSLQSDY, AAFLYGLGLVYFHYNAFQWAIKAFQEVLYVDPSF, KEIHLRLGLMFKVNTDYESSLKHFQLALVDCNPCT, AEIQFHIAHLYETQRKYHSAKEAYEQLLQTENLS, ATIL…DPNS, GQSWYFLGRCYSSIGKVQDAFISYRQSIDKSEAS, DTWCSIGVLYQQQNQPMDALQAYICAVQLDHGH, and AAWMDLGTLYESCNQPQDAIKCYLNATRSKNCS. A compositionally biased stretch (polar residues) spans 439–453; the sequence is AMNTAQQNTSDNWSG. Residues 439–463 form a disordered region; it reads AMNTAQQNTSDNWSGGNAPPPVEQQ. An omega-N-methylarginine mark is found at arginine 519 and arginine 549. 3 stretches are compositionally biased toward polar residues: residues 596–606, 619–642, and 660–743; these read NHVTGSGSNGN, HNRTNLTSSTEEPWKNQLSNSTQG, and LSST…STAS. The interval 596-745 is disordered; that stretch reads NHVTGSGSNG…ETPNSTASVE (150 aa). Serine 769 carries the phosphoserine modification. Disordered regions lie at residues 795 to 863, 914 to 941, and 1043 to 1080; these read GTCD…EESQ, LLDKCPPPRPPSSPYPPLPKDKLNPPTP, and FQESLREENEKRSHHKDHSDSESTSSDNSGKRRKGPFK. Over residues 814 to 833 the composition is skewed to low complexity; the sequence is SVASSPSSAISTATPSPKST. Phosphothreonine is present on threonine 827. Serine 829 is modified (phosphoserine). A compositionally biased stretch (polar residues) spans 834-848; the sequence is EQTTTNSVTSLNSPH. Positions 918–931 are enriched in pro residues; that stretch reads CPPPRPPSSPYPPL. The span at 1046-1063 shows a compositional bias: basic and acidic residues; the sequence is SLREENEKRSHHKDHSDS. The JmjC domain maps to 1095–1258; sequence KWKLQLHELT…YKLAVERYEW (164 aa). Residues histidine 1146, glutamate 1148, and histidine 1226 each coordinate Fe cation. Zn(2+) contacts are provided by cysteine 1331, cysteine 1334, cysteine 1358, and cysteine 1361.

The protein belongs to the UTX family. As to quaternary structure, component of the MLL2/3 complex (also named ASCOM complex), at least composed of KMT2D/MLL2 or KMT2C/MLL3, ASH2L, RBBP5, WDR5, NCOA6, DPY30, KDM6A (or KDM6B), PAXIP1/PTIP, PAGR1 and alpha- and beta-tubulin. Interacts with TLE1. Interacts with SUPT6H. Interacts with SMARCA4. Interacts with PROSER1. L-ascorbate is required as a cofactor. Fe(2+) serves as cofactor. As to expression, expressed in brain, heart and spleen.

The protein resides in the nucleus. It carries out the reaction N(6),N(6),N(6)-trimethyl-L-lysyl(27)-[histone H3] + 2 2-oxoglutarate + 2 O2 = N(6)-methyl-L-lysyl(27)-[histone H3] + 2 formaldehyde + 2 succinate + 2 CO2. Histone demethylase that specifically demethylates 'Lys-27' of histone H3, thereby playing a central role in histone code. Demethylates trimethylated and dimethylated but not monomethylated H3 'Lys-27'. Plays a central role in regulation of posterior development, by regulating HOX gene expression. Demethylation of 'Lys-27' of histone H3 is concomitant with methylation of 'Lys-4' of histone H3, and regulates the recruitment of the PRC1 complex and monoubiquitination of histone H2A. Plays a demethylase-independent role in chromatin remodeling to regulate T-box family member-dependent gene expression. The polypeptide is Lysine-specific demethylase 6A (Kdm6a) (Mus musculus (Mouse)).